The sequence spans 372 residues: 4-hydroxy-3-methylbut-2-en-1-yl diphosphate synthase (flavodoxin) (372 aa).

Positions 270, 273, 305, and 312 each coordinate [4Fe-4S] cluster.

It belongs to the IspG family. The cofactor is [4Fe-4S] cluster.

The enzyme catalyses (2E)-4-hydroxy-3-methylbut-2-enyl diphosphate + oxidized [flavodoxin] + H2O + 2 H(+) = 2-C-methyl-D-erythritol 2,4-cyclic diphosphate + reduced [flavodoxin]. The protein operates within isoprenoid biosynthesis; isopentenyl diphosphate biosynthesis via DXP pathway; isopentenyl diphosphate from 1-deoxy-D-xylulose 5-phosphate: step 5/6. Converts 2C-methyl-D-erythritol 2,4-cyclodiphosphate (ME-2,4cPP) into 1-hydroxy-2-methyl-2-(E)-butenyl 4-diphosphate. This Salmonella choleraesuis (strain SC-B67) protein is 4-hydroxy-3-methylbut-2-en-1-yl diphosphate synthase (flavodoxin).